A 181-amino-acid polypeptide reads, in one-letter code: UPF0398 protein lin2003 (181 aa).

It belongs to the UPF0398 family.

The protein is UPF0398 protein lin2003 of Listeria innocua serovar 6a (strain ATCC BAA-680 / CLIP 11262).